A 577-amino-acid chain; its full sequence is Scoloptoxin SSD14 (577 aa).

Residues 1 to 25 form the signal peptide; it reads MGTSYRKLGYVLFLMLGMIVEEGIA.

In terms of assembly, heterodimer composed of subunits alpha and beta; probably disulfide-linked. As to expression, expressed by the venom gland.

The protein localises to the secreted. Dose-dependently induces human platelet aggregation on both plasma rich platelet and washed platelet (max. response at 3.2 ug/mL) and causes hemolysis against mouse and rabbit erythrocytes (35 and 65% respectively at 5 ug/mL). Does not show hemolytic activity against human erythrocytes (even at 100 ug/mL). In Scolopendra dehaani (Thai centipede), this protein is Scoloptoxin SSD14.